We begin with the raw amino-acid sequence, 212 residues long: Noggin-2 (212 aa).

The N-terminal stretch at 1 to 23 (MGSITRALPLLLLLLLCAHGTAS) is a signal peptide. Residues 37 to 56 (LPVPDLIENPDPEHDPREQD) are disordered. Basic and acidic residues predominate over residues 47–56 (DPEHDPREQD). Asparagine 84 is a glycosylation site (N-linked (GlcNAc...) asparagine).

Belongs to the noggin family. As to quaternary structure, homodimer; disulfide-linked.

The protein resides in the secreted. Inhibitor of bone morphogenetic proteins (BMP) signaling. This is Noggin-2 (nog2) from Danio rerio (Zebrafish).